Consider the following 362-residue polypeptide: Outer membrane porin F (362 aa).

Positions 1–22 (MMKRNILAVIVPALLVAGTANA) are cleaved as a signal peptide.

This sequence belongs to the Gram-negative porin family. In terms of assembly, homotrimer. Forms mixed heterotrimers with OmpC; other mixed heterotrimers are also probable.

The protein resides in the cell outer membrane. Forms pores that allow passive diffusion of small molecules across the outer membrane. Functionally, (Microbial infection) Is the major receptor for colicin E5. Its function is as follows. (Microbial infection) A mixed OmpC-OmpF heterotrimer is the outer membrane receptor for toxin CdiA-EC536. The chain is Outer membrane porin F (ompF) from Escherichia coli O6:K15:H31 (strain 536 / UPEC).